Here is a 229-residue protein sequence, read N- to C-terminus: Cytochrome b6-f complex iron-sulfur subunit, chloroplastic (229 aa).

The transit peptide at 1–50 (MASSSLSPATQLGSSRSALMAMSSGLFVKPTKMNHQMVRKEKIGLRISCQ) directs the protein to the chloroplast. The chain crosses the membrane as a helical span at residues 68 to 90 (LNLLLLGALSLPTGYMLVPYATF). The region spanning 115–211 (AAEWLKTHGP…ADIDEAGKVL (97 aa)) is the Rieske domain. Residues Cys157, His159, Cys175, and His178 each coordinate [2Fe-2S] cluster. Cys162 and Cys177 are disulfide-bonded. Ser196 is subject to Phosphoserine.

It belongs to the Rieske iron-sulfur protein family. In terms of assembly, the 4 large subunits of the cytochrome b6-f complex are cytochrome b6, subunit IV (17 kDa polypeptide, petD), cytochrome f and the Rieske protein, while the 4 small subunits are petG, petL, petM and petN. The complex functions as a dimer. Interacts with PGRL1A. Component of a mitochondrial large protein complex that contains, at least, MIC60, DGS1, TOM40, TOM20 proteins, and petC/RISP. Requires [2Fe-2S] cluster as cofactor. Confined to photosynthetic tissues, with highest levels in flowers. In leaves, mostly localized in mesophyll cells. In stems, confined to the peripheral ring of chlorenchyma and adjoining groups of cells associated with the vascular bundles. In siliques, present in green wall of the fruit and in peduncle but not in the translucide white septum of the seeds.

The protein resides in the plastid. Its subcellular location is the chloroplast thylakoid membrane. It is found in the mitochondrion inner membrane. It catalyses the reaction 2 oxidized [plastocyanin] + a plastoquinol + 2 H(+)(in) = 2 reduced [plastocyanin] + a plastoquinone + 4 H(+)(out). In terms of biological role, essential protein for photoautotrophism. Confers resistance to photo-oxidative damages by contributing to the thermal dissipation of light energy and to lumenal acidification (increase of pH gradient). Component of the cytochrome b6-f complex, which mediates electron transfer between photosystem II (PSII) and photosystem I (PSI), cyclic electron flow around PSI, and state transitions. The sequence is that of Cytochrome b6-f complex iron-sulfur subunit, chloroplastic from Arabidopsis thaliana (Mouse-ear cress).